The following is a 381-amino-acid chain: MGPQNRNTSFAPDLNPPQDHVSLNYSYGDYDLPLGEDEDVTKTQTFFAAKIVIGVALAGIMLVCGIGNFVFIAALARYKKLRNLTNLLIANLAISDFLVAIVCCPFEMDYYVVRQLSWAHGHVLCASVNYLRTVSLYVSTNALLAIAIDRYLAIVHPLKPRMNYQTASFLIALVWMVSILIAVPSAYFTTETILVIVKNQEKIFCGQIWSVDQQLYYKSYFLFVFGLEFVGPVVTMTLCYARISQELWFKAVPGFQTEQIRKRLRCRRKTVLLLMGILTAYVLCWAPFYGFTIVRDFFPTVVVKEKHYLTAFYVVECIAMSNSMINTICFVTVKNNTMKYFKKMLRLHWRPSHYGSKSSADLDLKTSGVPATEEVDCIRLK.

At 1 to 51 (MGPQNRNTSFAPDLNPPQDHVSLNYSYGDYDLPLGEDEDVTKTQTFFAAKI) the chain is on the extracellular side. N-linked (GlcNAc...) asparagine glycosylation is found at Asn7 and Asn24. A helical membrane pass occupies residues 52–72 (VIGVALAGIMLVCGIGNFVFI). Residues 73-86 (AALARYKKLRNLTN) lie on the Cytoplasmic side of the membrane. The helical transmembrane segment at 87-107 (LLIANLAISDFLVAIVCCPFE) threads the bilayer. Over 108–133 (MDYYVVRQLSWAHGHVLCASVNYLRT) the chain is Extracellular. Cys125 and Cys205 are joined by a disulfide. The chain crosses the membrane as a helical span at residues 134–154 (VSLYVSTNALLAIAIDRYLAI). Residues 155–168 (VHPLKPRMNYQTAS) lie on the Cytoplasmic side of the membrane. A helical transmembrane segment spans residues 169 to 189 (FLIALVWMVSILIAVPSAYFT). Residues 190-220 (TETILVIVKNQEKIFCGQIWSVDQQLYYKSY) lie on the Extracellular side of the membrane. A helical transmembrane segment spans residues 221 to 241 (FLFVFGLEFVGPVVTMTLCYA). Over 242–270 (RISQELWFKAVPGFQTEQIRKRLRCRRKT) the chain is Cytoplasmic. A helical membrane pass occupies residues 271-291 (VLLLMGILTAYVLCWAPFYGF). The Extracellular portion of the chain corresponds to 292–310 (TIVRDFFPTVVVKEKHYLT). A helical transmembrane segment spans residues 311 to 331 (AFYVVECIAMSNSMINTICFV). Residues 332–381 (TVKNNTMKYFKKMLRLHWRPSHYGSKSSADLDLKTSGVPATEEVDCIRLK) are Cytoplasmic-facing.

It belongs to the G-protein coupled receptor 1 family. As to quaternary structure, homodimer. As to expression, expressed in several regions of the brain, including paraventricular hypothalamic nucleus, dorsal medial hypothalamic nucleus, paratenial thalamic nuclei, paracentral thalamic nucleus, lateral habenular nucleus, lateral septal nucleus, lateral globus pallidus and amygdala. Highest expression seen in paraventricular thalamic nuclei and is also extensively expressed in the suprachiasmatic nucleus.

The protein localises to the cell membrane. Its function is as follows. Receptor for prokineticin 2. Exclusively coupled to the G(q) subclass of heteromeric G proteins. Activation leads to mobilization of calcium, stimulation of phosphoinositide turnover and activation of p44/p42 mitogen-activated protein kinase. This Mus musculus (Mouse) protein is Prokineticin receptor 2 (Prokr2).